Consider the following 68-residue polypeptide: Serine palmitoyltransferase small subunit A (68 aa).

At 1-9 the chain is on the cytoplasmic side; that stretch reads MALARAWKQ. A helical transmembrane segment spans residues 10 to 26; sequence MSWFYYQYLLVTALYML. The Lumenal portion of the chain corresponds to 27-31; the sequence is EPWER. The helical transmembrane segment at 32-54 threads the bilayer; sequence TVFNSMLVSIVGMALYTGYVFMP. Topologically, residues 55 to 68 are cytoplasmic; sequence QHIMAILHYFEIVQ.

Belongs to the SPTSS family. SPTSSA subfamily. In terms of assembly, component of the serine palmitoyltransferase (SPT) complex, which is composed of SPTLC1, SPTLC2 or SPTLC3 and SPTSSA or SPTSSB. The heterodimer consisting of SPTLC1 and SPTLC2/SPTLC3 forms the catalytic core of the enzyme, while SPTSSA or SPTSSB subunits determine substrate specificity. SPT also interacts with ORMDL proteins, especially ORMDL3, which negatively regulate SPT activity in the presence of ceramides. Interacts with MBOAT7; the interaction plays a role in MBOAT7 localization to mitochondria-associated membranes.

Its subcellular location is the endoplasmic reticulum membrane. The protein operates within lipid metabolism; sphingolipid metabolism. Component of the serine palmitoyltransferase multisubunit enzyme (SPT) that catalyzes the initial and rate-limiting step in sphingolipid biosynthesis by condensing L-serine and activated acyl-CoA (most commonly palmitoyl-CoA) to form long-chain bases. The SPT complex is composed of SPTLC1, SPTLC2 or SPTLC3 and SPTSSA or SPTSSB. Within this complex, the heterodimer consisting of SPTLC1 and SPTLC2/SPTLC3 forms the catalytic core. Within the SPT complex, SPTSSA stimulates the catalytic activity and plays a role in substrate specificity, which depends upon the overall complex composition. The SPTLC1-SPTLC2-SPTSSA complex shows a strong preference for C16-CoA substrate, while the SPTLC1-SPTLC3-SPTSSA isozyme uses both C14-CoA and C16-CoA as substrates, with a slight preference for C14-CoA. Independently of its action as a SPT component, may be involved in MBOAT7 localization to mitochondria-associated membranes, a membrane bridge between the endoplasmic reticulum and mitochondria, may hence affect MBOAT7-catalyzed incorporation of arachidonic acid into phosphatidylinositol. The protein is Serine palmitoyltransferase small subunit A (SPTSSA) of Bos taurus (Bovine).